The primary structure comprises 510 residues: Bifunctional pantoate ligase/cytidylate kinase (510 aa).

The segment at 1-276 (MKKVIIRKTE…CGETRLIDHV (276 aa)) is pantoate--beta-alanine ligase. An ATP-binding site is contributed by 29–36 (MGNLHNGH). Catalysis depends on His36, which acts as the Proton donor. Gln61 provides a ligand contact to (R)-pantoate. Position 61 (Gln61) interacts with beta-alanine. 150 to 153 (GEKD) is an ATP binding site. Gln156 is a binding site for (R)-pantoate. Position 187-190 (187-190 (LSSR)) interacts with ATP. The interval 277–510 (FLMKRRPIIA…DKIPKETEIK (234 aa)) is cytidylate kinase.

In the N-terminal section; belongs to the pantothenate synthetase family. This sequence in the C-terminal section; belongs to the cytidylate kinase family. Type 1 subfamily.

It is found in the cytoplasm. It carries out the reaction (R)-pantoate + beta-alanine + ATP = (R)-pantothenate + AMP + diphosphate + H(+). It catalyses the reaction CMP + ATP = CDP + ADP. The enzyme catalyses dCMP + ATP = dCDP + ADP. The protein operates within cofactor biosynthesis; (R)-pantothenate biosynthesis; (R)-pantothenate from (R)-pantoate and beta-alanine: step 1/1. In terms of biological role, catalyzes the condensation of pantoate with beta-alanine in an ATP-dependent reaction via a pantoyl-adenylate intermediate. Functionally, catalyzes the transfer of a phosphate group from ATP to either CMP or dCMP to form CDP or dCDP and ADP, respectively. The sequence is that of Bifunctional pantoate ligase/cytidylate kinase from Prochlorococcus marinus (strain MIT 9215).